Reading from the N-terminus, the 507-residue chain is Chromosomal replication initiator protein DnaA (507 aa).

Positions 1–72 (MNNYNKIWEI…KKITKLKFEE (72 aa)) are domain I, interacts with DnaA modulators. A domain II region spans residues 72 to 162 (EKIIIEFVSE…KISFNKYNYG (91 aa)). Residues 163-384 (NTNPKYSFDN…GALLRLLNYA (222 aa)) are domain III, AAA+ region. ATP-binding residues include Gly207, Gly209, Lys210, and Thr211. The interval 385–507 (QTFGYDIDIN…LELILKKINS (123 aa)) is domain IV, binds dsDNA.

The protein belongs to the DnaA family. As to quaternary structure, oligomerizes as a right-handed, spiral filament on DNA at oriC.

The protein resides in the cytoplasm. Plays an essential role in the initiation and regulation of chromosomal replication. ATP-DnaA binds to the origin of replication (oriC) to initiate formation of the DNA replication initiation complex once per cell cycle. Binds the DnaA box (a 9 base pair repeat at the origin) and separates the double-stranded (ds)DNA. Forms a right-handed helical filament on oriC DNA; dsDNA binds to the exterior of the filament while single-stranded (ss)DNA is stabiized in the filament's interior. The ATP-DnaA-oriC complex binds and stabilizes one strand of the AT-rich DNA unwinding element (DUE), permitting loading of DNA polymerase. After initiation quickly degrades to an ADP-DnaA complex that is not apt for DNA replication. Binds acidic phospholipids. In Onion yellows phytoplasma (strain OY-M), this protein is Chromosomal replication initiator protein DnaA.